We begin with the raw amino-acid sequence, 157 residues long: Small ribosomal subunit protein uS7 (157 aa).

Belongs to the universal ribosomal protein uS7 family. In terms of assembly, part of the 30S ribosomal subunit. Contacts proteins S9 and S11.

Its function is as follows. One of the primary rRNA binding proteins, it binds directly to 16S rRNA where it nucleates assembly of the head domain of the 30S subunit. Is located at the subunit interface close to the decoding center, probably blocks exit of the E-site tRNA. In Borreliella burgdorferi (strain ATCC 35210 / DSM 4680 / CIP 102532 / B31) (Borrelia burgdorferi), this protein is Small ribosomal subunit protein uS7.